Reading from the N-terminus, the 441-residue chain is Velvet complex subunit B (441 aa).

2 stretches are compositionally biased toward polar residues: residues 1-14 (MNPGYSSTASQPGH) and 60-75 (MMQQPQDQPAPSSTTE). Residues 1–104 (MNPGYSSTAS…QPHVGEQDGR (104 aa)) form a disordered region. The 327-residue stretch at 100–426 (EQDGRKYRLD…AGQGIKIPIR (327 aa)) folds into the Velvet domain.

It belongs to the velvet family. VelB subfamily. As to quaternary structure, component of the heterotrimeric velvet complex composed of LAEA, VEA and VELB; VEA acting as a bridging protein between LAEA and VELB. Forms a heterodimeric complex with VOSA; the formation of the VELB-VOSA complex is light-dependent.

The protein localises to the nucleus. It is found in the cytoplasm. In terms of biological role, component of the velvet transcription factor complex that controls sexual/asexual developmental ratio in response to light, promoting sexual development in the darkness while stimulating asexual sporulation under illumination. The velvet complex acts as a global regulator for secondary metabolite gene expression. Component of the VELB-VOSA heterodimeric complex that plays a dual role in activating genes associated with spore maturation and repressing certain development-associated genes. The VELB-VOSA complex binds DNA through the DNA-binding domain of VOSA that recognizes an 11-nucleotide consensus sequence 5'-CTGGCCGCGGC-3' consisting of two motifs in the promoters of key developmental regulatory genes. Involved in the regulation of the response to eactive oxygen species (ROS) stress. This Pyricularia oryzae (strain 70-15 / ATCC MYA-4617 / FGSC 8958) (Rice blast fungus) protein is Velvet complex subunit B.